Consider the following 476-residue polypeptide: Phosphomethylpyrimidine synthase (476 aa).

The tract at residues 1–27 (MSTQLQHARDGTVTDAMRRVADREGRD) is disordered. Residues 7–27 (HARDGTVTDAMRRVADREGRD) are compositionally biased toward basic and acidic residues. Residues asparagine 67, methionine 96, tyrosine 125, histidine 160, 180 to 182 (SRG), 221 to 224 (DGLR), and glutamate 260 each bind substrate. Histidine 264 is a binding site for Zn(2+). Tyrosine 287 is a binding site for substrate. Histidine 328 serves as a coordination point for Zn(2+). [4Fe-4S] cluster contacts are provided by cysteine 408, cysteine 411, and cysteine 416. Positions 425–476 (RDAGDDADDMTELTTETDLSESAAAEVNRPPTGTHDAPAAEQAPSPGDDDDD) are disordered. Low complexity predominate over residues 436–447 (ELTTETDLSESA).

It belongs to the ThiC family. It depends on [4Fe-4S] cluster as a cofactor.

It carries out the reaction 5-amino-1-(5-phospho-beta-D-ribosyl)imidazole + S-adenosyl-L-methionine = 4-amino-2-methyl-5-(phosphooxymethyl)pyrimidine + CO + 5'-deoxyadenosine + formate + L-methionine + 3 H(+). It participates in cofactor biosynthesis; thiamine diphosphate biosynthesis. Its function is as follows. Catalyzes the synthesis of the hydroxymethylpyrimidine phosphate (HMP-P) moiety of thiamine from aminoimidazole ribotide (AIR) in a radical S-adenosyl-L-methionine (SAM)-dependent reaction. The chain is Phosphomethylpyrimidine synthase from Halobacterium salinarum (strain ATCC 29341 / DSM 671 / R1).